The sequence spans 38 residues: Large ribosomal subunit protein bL36 (38 aa).

It belongs to the bacterial ribosomal protein bL36 family.

The sequence is that of Large ribosomal subunit protein bL36 from Buchnera aphidicola subsp. Schizaphis graminum (strain Sg).